The chain runs to 190 residues: Xanthine phosphoribosyltransferase (190 aa).

The xanthine site is built by Leu20 and Asn27. Position 128 to 132 (Ala128 to Ala132) interacts with 5-phospho-alpha-D-ribose 1-diphosphate. A xanthine-binding site is contributed by Lys156.

This sequence belongs to the purine/pyrimidine phosphoribosyltransferase family. Xpt subfamily. As to quaternary structure, homodimer.

Its subcellular location is the cytoplasm. The enzyme catalyses XMP + diphosphate = xanthine + 5-phospho-alpha-D-ribose 1-diphosphate. Its pathway is purine metabolism; XMP biosynthesis via salvage pathway; XMP from xanthine: step 1/1. Its function is as follows. Converts the preformed base xanthine, a product of nucleic acid breakdown, to xanthosine 5'-monophosphate (XMP), so it can be reused for RNA or DNA synthesis. In Pseudomonas aeruginosa (strain ATCC 15692 / DSM 22644 / CIP 104116 / JCM 14847 / LMG 12228 / 1C / PRS 101 / PAO1), this protein is Xanthine phosphoribosyltransferase.